Consider the following 128-residue polypeptide: Flagellar basal body rod protein FlgB (128 aa).

This sequence belongs to the flagella basal body rod proteins family. The basal body constitutes a major portion of the flagellar organelle and consists of a number of rings mounted on a central rod. In Gram-negative bacteria, at least four rings, L, P, S and M are present, whereas Gram-positive bacteria lack the L and P rings. The rod consists of about 26 subunits of FlgG in the distal portion, and FlgB, FlgC and FlgF build up the proximal portion of the rod with about 6 subunits each. Rod assembly occurs by export via the flagellum-specific pathway of its constituent proteins and by their incorporation into the rod structure in the probable order of FlgB, FlgC, FlgF and FlgG. Another protein, FliE, also assembles onto the stable rod structure.

It is found in the bacterial flagellum basal body. Functionally, structural component of flagellum, the bacterial motility apparatus. Part of the rod structure of flagellar basal body. The protein is Flagellar basal body rod protein FlgB of Cereibacter sphaeroides (Rhodobacter sphaeroides).